We begin with the raw amino-acid sequence, 151 residues long: 3-hydroxyacyl-[acyl-carrier-protein] dehydratase FabZ (151 aa).

His-56 is a catalytic residue.

The protein belongs to the thioester dehydratase family. FabZ subfamily.

It localises to the cytoplasm. The catalysed reaction is a (3R)-hydroxyacyl-[ACP] = a (2E)-enoyl-[ACP] + H2O. Involved in unsaturated fatty acids biosynthesis. Catalyzes the dehydration of short chain beta-hydroxyacyl-ACPs and long chain saturated and unsaturated beta-hydroxyacyl-ACPs. The chain is 3-hydroxyacyl-[acyl-carrier-protein] dehydratase FabZ from Nitrobacter winogradskyi (strain ATCC 25391 / DSM 10237 / CIP 104748 / NCIMB 11846 / Nb-255).